Here is a 433-residue protein sequence, read N- to C-terminus: MFVSPPPATSKNQVLQRRPLESTNSNHGFASSLQAIPENTMSGSDNASFQSLPLSMSSSQSTTSSRRENFVNAPPEYTDRARDEIKKRLLASSPSRRSHHSSSMHSASRRSSVAESGSLLSDNASSYQSSIFSAPSTVHTQLTNDSSFSEFPNHKLITRVSLDEALPKTFYDMYSPDILLADPSNILCNGRPKFTKRELLDWDLNDIRSLLIVEKLRPEWGNQLPEVITVGDNMPQFRLQLLPLYSSDETIIATLVHSDLYMEANLDYEFKLTSAKYTVATARKRHEHITGRNEAVMNLSKPEWRNIIENYLLNIAVEAQCRFDFKQRCSEYKKWKLQQSNLKRPDMPPPSIIPRKNSTETKSLLKKALLKNIQLKNPNNNLDELMMRSSAATNQQGKNKVSLSKEEKATIWSQCQAQVYQRLGLDWQPDSVS.

Positions 1-117 are disordered; the sequence is MFVSPPPATS…SRRSSVAESG (117 aa). Residues 9–47 are compositionally biased toward polar residues; that stretch reads TSKNQVLQRRPLESTNSNHGFASSLQAIPENTMSGSDNA. Over residues 48–64 the composition is skewed to low complexity; sequence SFQSLPLSMSSSQSTTS. Basic and acidic residues predominate over residues 77–87; that stretch reads YTDRARDEIKK.

The protein to yeast STD1/MSN3.

This chain is Protein MTH1 (MTH1), found in Saccharomyces cerevisiae (strain ATCC 204508 / S288c) (Baker's yeast).